The sequence spans 1010 residues: MRFFISHLVTLCFIFCVADSTHFSEEGNKGYGPVFEEQPIDTIYPEESSDGQVSMNCRARAVPFPTYKWKLNNWDIDLTKDRYSMVGGRLVISNPEKSRDAGKYVCVVSNIFGTVRSSEATLSFGYLDPFPPEEHYEVKVREGVGAVLLCEPPYHYPDDLSYRWLLNEFPVFIALDRRRFVSQTNGNLYIANVEASDKGNYSCFVSSPSITKSVFSKFIPLIPQADRAKVYPADIKVKFKDTYALLGQNVTLECFALGNPVPELRWSKYLEPMPATAEISMSGAVLKIFNIQYEDEGLYECEAENYKGKDKHQARVYVQASPEWVEHINDTEKDIGSDLYWPCVATGKPIPTIRWLKNGVSFRKGELRIQGLTFEDAGMYQCIAENAHGIIYANAELKIVASPPTFELNPMKKKILAAKGGRVIIECKPKAAPKPKFSWSKGTELLVNGSRIHIWDDGSLEIINVTKLDEGRYTCFAENNRGKANSTGVLEMTEATRITLAPLNVDVTVGENATMQCIASHDPTLDLTFIWSLNGFVIDFEKEHEHYERNVMIKSNGELLIKNVQLRHAGRYTCTAQTIVDNSSASADLVVRGPPGPPGGIRIEEIRDTAVALTWSRGTDNHSPISKYTIQSKTFLSEEWKDAKTEPSDIEGNMESARVIDLIPWMEYEFRIIATNTLGTGEPSMPSQRIRTEGAPPNVAPSDVGGGGGSNRELTITWMPLSREYHYGNNFGYIVAFKPFGEKEWRRVTVTNPEIGRYVHKDESMPPSTQYQVKVKAFNSKGDGPFSLTAVIYSAQDAPTEVPTDVSVKVLSSSEISVSWHHVTEKSVEGYQIRYWAAHDKEAAAQRVQVSNQEYSTKLENLKPNTRYHIDVSAFNSAGYGPPSRTIDIITRKAPPSQRPRIISSVRSGSRYIITWDHVKAMSNESAVEGYKVLYRPDGQHEGKLFSTGKHTIEVPVPSDGEYVVEVRAHSEGGDGEVAQIKISGATAGVPTLLLGLVLPALGVLAYSGF.

Residues Met-1 to Asp-19 form the signal peptide. Ig-like C2-type domains are found at residues Pro-33 to Ser-123, Pro-132 to Phe-215, Pro-232 to Tyr-317, Pro-322 to Lys-398, Pro-404 to Glu-491, and Thr-496 to Arg-592. 2 disulfide bridges follow: Cys-57–Cys-106 and Cys-150–Cys-203. Residues Asn-200 and Asn-249 are each glycosylated (N-linked (GlcNAc...) asparagine). The cysteines at positions 254 and 301 are disulfide-linked. Asn-329 is a glycosylation site (N-linked (GlcNAc...) asparagine). 2 disulfide bridges follow: Cys-343/Cys-382 and Cys-427/Cys-475. N-linked (GlcNAc...) asparagine glycosylation is found at Asn-448, Asn-464, Asn-485, and Asn-512. Cys-517 and Cys-574 are disulfide-bonded. A glycan (N-linked (GlcNAc...) asparagine) is linked at Asn-582. Fibronectin type-III domains lie at Pro-597–Ala-695, Ala-700–Asp-797, Val-802–Ser-897, and Arg-899–Val-990. Residues Gly-679–Arg-689 are compositionally biased toward polar residues. The disordered stretch occupies residues Gly-679 to Gly-708. Asn-924 is a glycosylation site (N-linked (GlcNAc...) asparagine). Ser-984 is lipidated: GPI-anchor amidated serine. Positions Gly-985 to Phe-1010 are cleaved as a propeptide — removed in mature form.

The protein belongs to the immunoglobulin superfamily. Contactin family. In terms of assembly, interacts with TNR.

It localises to the cell membrane. Functionally, mediates cell surface interactions during nervous system development. Interaction with TNR enhances the neurite outgrowth. This Gallus gallus (Chicken) protein is Contactin-1 (CNTN1).